The primary structure comprises 336 residues: Ferrochelatase (336 aa).

His206 and Glu287 together coordinate Fe cation.

Belongs to the ferrochelatase family.

Its subcellular location is the cytoplasm. It catalyses the reaction heme b + 2 H(+) = protoporphyrin IX + Fe(2+). It participates in porphyrin-containing compound metabolism; protoheme biosynthesis; protoheme from protoporphyrin-IX: step 1/1. Catalyzes the ferrous insertion into protoporphyrin IX. This is Ferrochelatase from Neisseria meningitidis serogroup A / serotype 4A (strain DSM 15465 / Z2491).